A 184-amino-acid polypeptide reads, in one-letter code: Mediator of RNA polymerase II transcription subunit 28 (184 aa).

The stretch at 77 to 105 (LLKEENFDLKQEIARKDELIRKHYEKIES) forms a coiled coil.

Belongs to the Mediator complex subunit 28 family. Component of the Mediator complex.

It is found in the nucleus. In terms of biological role, component of the Mediator complex, a coactivator involved in the regulated transcription of nearly all RNA polymerase II-dependent genes. Mediator functions as a bridge to convey information from gene-specific regulatory proteins to the basal RNA polymerase II transcription machinery. Mediator is recruited to promoters by direct interactions with regulatory proteins and serves as a scaffold for the assembly of a functional preinitiation complex with RNA polymerase II and the general transcription factors. In Aedes aegypti (Yellowfever mosquito), this protein is Mediator of RNA polymerase II transcription subunit 28 (MED28).